A 130-amino-acid polypeptide reads, in one-letter code: Ribosome-binding factor A (130 aa).

Positions 111–130 are disordered; sequence RDLDDVGPEATSSDEDAEQR.

This sequence belongs to the RbfA family. Monomer. Binds 30S ribosomal subunits, but not 50S ribosomal subunits or 70S ribosomes.

Its subcellular location is the cytoplasm. Functionally, one of several proteins that assist in the late maturation steps of the functional core of the 30S ribosomal subunit. Associates with free 30S ribosomal subunits (but not with 30S subunits that are part of 70S ribosomes or polysomes). Required for efficient processing of 16S rRNA. May interact with the 5'-terminal helix region of 16S rRNA. The sequence is that of Ribosome-binding factor A from Xanthomonas euvesicatoria pv. vesicatoria (strain 85-10) (Xanthomonas campestris pv. vesicatoria).